Reading from the N-terminus, the 402-residue chain is 1-deoxy-D-xylulose 5-phosphate reductoisomerase (402 aa).

T13, G14, S15, I16, and N126 together coordinate NADPH. 1-deoxy-D-xylulose 5-phosphate is bound at residue K127. Residue E128 participates in NADPH binding. D152 contributes to the Mn(2+) binding site. S153, E154, S188, and H211 together coordinate 1-deoxy-D-xylulose 5-phosphate. Residue E154 coordinates Mn(2+). Residue G217 coordinates NADPH. 1-deoxy-D-xylulose 5-phosphate contacts are provided by S224, N229, K230, and E233. Residue E233 coordinates Mn(2+).

This sequence belongs to the DXR family. It depends on Mg(2+) as a cofactor. Mn(2+) serves as cofactor.

The enzyme catalyses 2-C-methyl-D-erythritol 4-phosphate + NADP(+) = 1-deoxy-D-xylulose 5-phosphate + NADPH + H(+). Its pathway is isoprenoid biosynthesis; isopentenyl diphosphate biosynthesis via DXP pathway; isopentenyl diphosphate from 1-deoxy-D-xylulose 5-phosphate: step 1/6. In terms of biological role, catalyzes the NADPH-dependent rearrangement and reduction of 1-deoxy-D-xylulose-5-phosphate (DXP) to 2-C-methyl-D-erythritol 4-phosphate (MEP). In Psychrobacter arcticus (strain DSM 17307 / VKM B-2377 / 273-4), this protein is 1-deoxy-D-xylulose 5-phosphate reductoisomerase.